Here is a 377-residue protein sequence, read N- to C-terminus: E3 ubiquitin-protein ligase RING1 (377 aa).

The segment at 1–205 (MDGTEIAVSP…GGAGSEDSGD (205 aa)) is necessary for transcriptional repression. Residue S9 is modified to Phosphoserine. An RING-type zinc finger spans residues 19–59 (CPICLDMLKNTMTTKECLHRFCSDCIVTALRSGNKECPTCR). Phosphoserine occurs at positions 111, 158, and 161. Disordered regions lie at residues 119-234 (QAMH…GEIE) and 280-325 (QQQE…PSLE). Residues 146–158 (DPGEGEGDGEDVS) are compositionally biased toward acidic residues. A Nuclear localization signal motif is present at residues 172-175 (KRPR). Positions 176–199 (GGGAGGSSVGTGGGGTGGVGGGAG) are enriched in gly residues. Phosphothreonine is present on residues T186 and T191. S200 and S203 each carry phosphoserine. The segment at 201 to 377 (EDSGDRGGTL…LCYAPTKDPK (177 aa)) is necessary for interaction with CBX2. Over residues 206-215 (RGGTLGGGTL) the composition is skewed to gly residues. Pro residues predominate over residues 217-229 (PPSPPGAPSPPEP). A phosphoserine mark is found at S219 and S225. Positions 286–314 (EPGGPGGGASDTGGPDGGGGEGGGAGGGD) are enriched in gly residues.

Component of chromatin-associated Polycomb (PcG) complexes. Part of the E2F6.com-1 complex in G0 phase composed of E2F6, MGA, MAX, TFDP1, CBX3, BAT8, EUHMTASE1, RING1, RNF2/RING2 MBLR, L3MBTL2 and YAF2. Interacts with CBX2 and PCGF6. Component of a PRC1-like complex. Component of repressive BCOR complex containing Polycomb group subcomplex at least composed of RYBP, PCGF1, BCOR and RNF2/RING2. Interacts with BMI1, PHC2, PCGF2, RNF2; CBX6, CBX7 and CBX8. Interacts with MN1.

It localises to the nucleus speckle. It carries out the reaction S-ubiquitinyl-[E2 ubiquitin-conjugating enzyme]-L-cysteine + [acceptor protein]-L-lysine = [E2 ubiquitin-conjugating enzyme]-L-cysteine + N(6)-ubiquitinyl-[acceptor protein]-L-lysine.. The protein operates within protein modification; protein ubiquitination. Functionally, constitutes one of the E3 ubiquitin-protein ligases that mediate monoubiquitination of 'Lys-119' of histone H2A, thereby playing a central role in histone code and gene regulation. H2A 'Lys-119' ubiquitination gives a specific tag for epigenetic transcriptional repression and participates in X chromosome inactivation of female mammals. Essential component of a Polycomb group (PcG) multiprotein PRC1-like complex, a complex class required to maintain the transcriptionally repressive state of many genes, including Hox genes, throughout development. PcG PRC1 complex acts via chromatin remodeling and modification of histones, rendering chromatin heritably changed in its expressibility. Compared to RNF2/RING2, it does not have the main E3 ubiquitin ligase activity on histone H2A, and it may rather act as a modulator of RNF2/RING2 activity. The sequence is that of E3 ubiquitin-protein ligase RING1 (RING1) from Gorilla gorilla gorilla (Western lowland gorilla).